The chain runs to 276 residues: MAVVTMKQLLDSGTHFGHQTRRWNPKMKRFIFTDRNGIYIIDLQQTLTFIDKAYEFVKETVAHGGTVLFVGTKKQAQESVAAEATRVGMPYVNQRWLGGMLTNFSTVHKRLQRLKELEAMEQTGGFEGRSKKEILGLTREKNKLERSLGGIRDMAKVPSAIWVVDTNKEHIAVGEARKLGIPVIAILDTNCDPDEVDYPIPGNDDAIRSAALLTKVIASAVAEGLQARAGAGRGDGKPVVEAAEPLAEWEQELLAGATAAAPAEGAVATETTPTEG.

The interval leucine 254–glycine 276 is disordered. Residues alanine 255–glycine 276 show a composition bias toward low complexity.

Belongs to the universal ribosomal protein uS2 family.

The polypeptide is Small ribosomal subunit protein uS2 (Mycobacterium ulcerans (strain Agy99)).